The primary structure comprises 359 residues: uncharacterized protein (359 aa).

Disordered regions lie at residues 90–117, 132–161, and 235–359; these read QESP…PSRK, IKKE…GMTS, and TSME…THRR. Residues 151 to 161 show a composition bias toward polar residues; the sequence is TPGSCSSGMTS. The span at 245–259 shows a compositional bias: low complexity; sequence KPPTVKSPPTVKLPP. Residues 286–299 are compositionally biased toward basic and acidic residues; that stretch reads EENKEVPKEAEHKP.

This is an uncharacterized protein from Homo sapiens (Human).